The following is a 91-amino-acid chain: Progonadoliberin-1 (91 aa).

Positions 1–21 (MVVKTWMPWLLVSSVLSQGCC) are cleaved as a signal peptide. At Gln22 the chain carries Pyrrolidone carboxylic acid. Gly31 is subject to Glycine amide.

It belongs to the GnRH family. Expressed in the cell bodies of a cluster of neurons in the preoptic region.

The protein localises to the secreted. Functionally, stimulates the secretion of gonadotropins. This is Progonadoliberin-1 (gnrh1) from Oryzias latipes (Japanese rice fish).